The chain runs to 81 residues: Cortexin-3 (81 aa).

A helical membrane pass occupies residues 29–49 (MTFVFVILLFIFLGILIVRCF).

The protein belongs to the cortexin family.

It is found in the membrane. The protein is Cortexin-3 (CTXN3) of Homo sapiens (Human).